The chain runs to 380 residues: MEINTDKYKNITRNLEREMINLNPIQRGGILPTESKKIIYEYWDGYSVCDYCSGRLDRIETPPINEFLEDMSKFLGMDITRPTHGARESKYAVMNSICKEGDYVVLDGNAHYTSYVAIERAKLNYEKTDIGEYPTFRVIPESYAEKIDMLEDSKKNIGLILLTHVDGNYGNVADVEKVGKIAKSKGYPFLLNCAYSAGRMPIDGKKLNVDFIAASGHKSMAASGPCGLLSINKKYEDEVLETSKVNVVKELQMLGCTSRGIPILSLMASFERLIERVKKWDLELEKTRKVVNELEPLGFKQIGEKPRNHDIIRFETPILDEIAEKDKRRGFFFYEELKRRGLGGIRRGVTKEFKMSVYGLTNTQVDYVINSMKTIINELR.

Pyridoxal 5'-phosphate is bound by residues 86 to 87 (AR), Asn192, and 215 to 217 (SGH). At Lys218 the chain carries N6-(pyridoxal phosphate)lysine.

Belongs to the SepCysS family. In terms of assembly, homodimer. Interacts with SepRS. Pyridoxal 5'-phosphate is required as a cofactor.

The catalysed reaction is O-phospho-L-seryl-tRNA(Cys) + hydrogen sulfide + H(+) = L-cysteinyl-tRNA(Cys) + phosphate. Functionally, converts O-phospho-L-seryl-tRNA(Cys) (Sep-tRNA(Cys)) to L-cysteinyl-tRNA(Cys) (Cys-tRNA(Cys)). The chain is O-phospho-L-seryl-tRNA:Cys-tRNA synthase from Methanococcus maripaludis (strain C5 / ATCC BAA-1333).